Reading from the N-terminus, the 207-residue chain is Small ribosomal subunit protein uS4 (207 aa).

Positions 26–53 (KPFDVKTKKHAKAPGQHGQARGKQSEYS) are disordered. One can recognise an S4 RNA-binding domain in the interval 97–159 (SRLDNVVYRM…AKQQLRIKNA (63 aa)).

It belongs to the universal ribosomal protein uS4 family. Part of the 30S ribosomal subunit. Contacts protein S5. The interaction surface between S4 and S5 is involved in control of translational fidelity.

Functionally, one of the primary rRNA binding proteins, it binds directly to 16S rRNA where it nucleates assembly of the body of the 30S subunit. Its function is as follows. With S5 and S12 plays an important role in translational accuracy. The chain is Small ribosomal subunit protein uS4 from Acinetobacter baylyi (strain ATCC 33305 / BD413 / ADP1).